The chain runs to 1310 residues: Clustered mitochondria protein homolog (1310 aa).

Residues 375-619 (DITRSQESYL…RVTPLDVVWQ (245 aa)) enclose the Clu domain. The segment covering 662–682 (KAQEDAANKEQPSETTESKEG) has biased composition (basic and acidic residues). Disordered stretches follow at residues 662–692 (KAQE…EEAL) and 931–960 (VANG…SRAV). 3 TPR repeats span residues 1033–1066 (AKLY…TERT), 1075–1108 (ILAY…WKII), and 1117–1150 (ITTM…CESL). Disordered stretches follow at residues 1245–1266 (VQPQ…ANAS) and 1281–1310 (GGDA…KSSA).

It belongs to the CLU family. In terms of assembly, may associate with the eukaryotic translation initiation factor 3 (eIF-3) complex.

It is found in the cytoplasm. Functionally, mRNA-binding protein involved in proper cytoplasmic distribution of mitochondria. This is Clustered mitochondria protein homolog from Aspergillus fumigatus (strain CBS 144.89 / FGSC A1163 / CEA10) (Neosartorya fumigata).